Consider the following 332-residue polypeptide: C4-dicarboxylate-binding periplasmic protein DctP (332 aa).

The first 22 residues, 1 to 22, serve as a signal peptide directing secretion; sequence MFKPLTLIAASILAVTSFNAAA.

This sequence belongs to the bacterial solute-binding protein 7 family. In terms of assembly, the complex comprises the extracytoplasmic solute receptor protein DctP, and the two transmembrane proteins DctQ and DctM.

It localises to the periplasm. In terms of biological role, part of the tripartite ATP-independent periplasmic (TRAP) transport system DctPQM involved in C4-dicarboxylates uptake. The protein is C4-dicarboxylate-binding periplasmic protein DctP of Vibrio cholerae serotype O1 (strain ATCC 39315 / El Tor Inaba N16961).